We begin with the raw amino-acid sequence, 206 residues long: Ribosomal RNA large subunit methyltransferase E (206 aa).

5 residues coordinate S-adenosyl-L-methionine: G54, W56, D76, D94, and D118. The active-site Proton acceptor is K158.

This sequence belongs to the class I-like SAM-binding methyltransferase superfamily. RNA methyltransferase RlmE family.

The protein localises to the cytoplasm. The enzyme catalyses uridine(2552) in 23S rRNA + S-adenosyl-L-methionine = 2'-O-methyluridine(2552) in 23S rRNA + S-adenosyl-L-homocysteine + H(+). In terms of biological role, specifically methylates the uridine in position 2552 of 23S rRNA at the 2'-O position of the ribose in the fully assembled 50S ribosomal subunit. This is Ribosomal RNA large subunit methyltransferase E from Methanosphaera stadtmanae (strain ATCC 43021 / DSM 3091 / JCM 11832 / MCB-3).